Consider the following 322-residue polypeptide: Adenine deaminase (322 aa).

Residues His11, His13, and His189 each coordinate Zn(2+). Glu192 functions as the Proton donor in the catalytic mechanism. Asp270 is a binding site for Zn(2+). Position 271 (Asp271) interacts with substrate.

Belongs to the metallo-dependent hydrolases superfamily. Adenosine and AMP deaminases family. Adenine deaminase type 2 subfamily. Zn(2+) is required as a cofactor.

The catalysed reaction is adenine + H2O + H(+) = hypoxanthine + NH4(+). In terms of biological role, catalyzes the hydrolytic deamination of adenine to hypoxanthine. Plays an important role in the purine salvage pathway and in nitrogen catabolism. This Rhizobium johnstonii (strain DSM 114642 / LMG 32736 / 3841) (Rhizobium leguminosarum bv. viciae) protein is Adenine deaminase.